Here is a 125-residue protein sequence, read N- to C-terminus: Small ribosomal subunit protein uS12 (125 aa).

Residue Asp-89 is modified to 3-methylthioaspartic acid.

This sequence belongs to the universal ribosomal protein uS12 family. As to quaternary structure, part of the 30S ribosomal subunit. Contacts proteins S8 and S17. May interact with IF1 in the 30S initiation complex.

Its function is as follows. With S4 and S5 plays an important role in translational accuracy. Functionally, interacts with and stabilizes bases of the 16S rRNA that are involved in tRNA selection in the A site and with the mRNA backbone. Located at the interface of the 30S and 50S subunits, it traverses the body of the 30S subunit contacting proteins on the other side and probably holding the rRNA structure together. The combined cluster of proteins S8, S12 and S17 appears to hold together the shoulder and platform of the 30S subunit. The sequence is that of Small ribosomal subunit protein uS12 from Clostridium kluyveri (strain ATCC 8527 / DSM 555 / NBRC 12016 / NCIMB 10680 / K1).